The sequence spans 283 residues: Release factor glutamine methyltransferase (283 aa).

S-adenosyl-L-methionine contacts are provided by residues 120–124 (GTGSG), Asp143, Phe172, and Asn187. Residue 187–190 (NPPY) participates in substrate binding.

Belongs to the protein N5-glutamine methyltransferase family. PrmC subfamily.

The enzyme catalyses L-glutaminyl-[peptide chain release factor] + S-adenosyl-L-methionine = N(5)-methyl-L-glutaminyl-[peptide chain release factor] + S-adenosyl-L-homocysteine + H(+). Functionally, methylates the class 1 translation termination release factors RF1/PrfA and RF2/PrfB on the glutamine residue of the universally conserved GGQ motif. The protein is Release factor glutamine methyltransferase of Moorella thermoacetica (strain ATCC 39073 / JCM 9320).